The sequence spans 224 residues: Cytidylate kinase (224 aa).

11-19 (GPAAAGKST) is a binding site for ATP.

This sequence belongs to the cytidylate kinase family. Type 1 subfamily.

It is found in the cytoplasm. It catalyses the reaction CMP + ATP = CDP + ADP. The enzyme catalyses dCMP + ATP = dCDP + ADP. In Listeria monocytogenes serovar 1/2a (strain ATCC BAA-679 / EGD-e), this protein is Cytidylate kinase.